The sequence spans 168 residues: uncharacterized protein (168 aa).

4 helical membrane-spanning segments follow: residues 1–21, 41–61, 68–88, and 123–143; these read MFWLLIAILIVQRAAEMAVAR, PYIITMHILFFLSLIAEVLLM, WWLGIAAVILSVQIVRYWALC, and VILEILLIPLLYQAYVTMCLF.

It is found in the cell membrane. This is an uncharacterized protein from Bacillus subtilis (strain 168).